The following is a 323-amino-acid chain: tRNA-cytidine(32) 2-sulfurtransferase (323 aa).

The PP-loop motif motif lies at 49-54 (SGGKDS). Positions 124, 127, and 215 each coordinate [4Fe-4S] cluster.

This sequence belongs to the TtcA family. As to quaternary structure, homodimer. It depends on Mg(2+) as a cofactor. [4Fe-4S] cluster serves as cofactor.

It is found in the cytoplasm. It carries out the reaction cytidine(32) in tRNA + S-sulfanyl-L-cysteinyl-[cysteine desulfurase] + AH2 + ATP = 2-thiocytidine(32) in tRNA + L-cysteinyl-[cysteine desulfurase] + A + AMP + diphosphate + H(+). The protein operates within tRNA modification. Its function is as follows. Catalyzes the ATP-dependent 2-thiolation of cytidine in position 32 of tRNA, to form 2-thiocytidine (s(2)C32). The sulfur atoms are provided by the cysteine/cysteine desulfurase (IscS) system. The protein is tRNA-cytidine(32) 2-sulfurtransferase of Shewanella denitrificans (strain OS217 / ATCC BAA-1090 / DSM 15013).